The chain runs to 563 residues: MDYKSKVAELIKKHVELEIEAIEKLIEIPPKPEMGDYAFPCFQLSKVMRKAPNMIAEELKNSMSTDGFERIENLGPYVNFFVDKGVFAENTIKKALEDGENYGASNIGEGKTVCVEYSSPNIAKPFHVGHLFTTAIGNSLYKMFKKEGYNTVGLNHLGDWGTQFGKLISAYDRWVDEEALEKAPIDELLRIYVKFHEEAEKDPSLEDEARANFKALETGDEKATALWTRFRDLSLKEFERVYNILGVKFDSLAGEAFYNDKMDVVVNELKEKGLLVESNGAQVVMLEEYNMPPCIVLKGDGASIYATRDLAAAMYRKKTYDFHKCVYVVGTPQALHFKQVFKVLELAGHEWAKDCVHVGFGLVKFADRKLSTRNGSIVLLDDLLREAVEKTMEVINEKNPELENKEEVAKKIGVGAVIFTYLKNSREKDIVFDWKEILSFDGETGPYVQYSYARGNSILNRGKECTGTVDYSKLSSKEEFELVKSIANFNSVITLALDKLEPSILTRYVIEVAKGFNKFYNAHSVLNLEDEDLKATRLNLVKASLQVIKNGLELLGIDVVEKM.

The 'HIGH' region motif lies at 120–130; it reads PNIAKPFHVGH.

Belongs to the class-I aminoacyl-tRNA synthetase family. In terms of assembly, monomer.

Its subcellular location is the cytoplasm. The enzyme catalyses tRNA(Arg) + L-arginine + ATP = L-arginyl-tRNA(Arg) + AMP + diphosphate. This Clostridium beijerinckii (strain ATCC 51743 / NCIMB 8052) (Clostridium acetobutylicum) protein is Arginine--tRNA ligase.